A 386-amino-acid polypeptide reads, in one-letter code: Protein phosphatase methylesterase 1 (386 aa).

A disordered region spans residues 20–48; that stretch reads ILEKLKGGQEPNSNEEGSDSIGDLPSLKN. Active-site residues include Ser-194, Asp-222, and His-348.

The protein belongs to the AB hydrolase superfamily.

The enzyme catalyses [phosphatase 2A protein]-C-terminal L-leucine methyl ester + H2O = [phosphatase 2A protein]-C-terminal L-leucine + methanol + H(+). In terms of biological role, demethylates proteins that have been reversibly carboxymethylated. Demethylates the phosphatase PP2A catalytic subunit. The polypeptide is Protein phosphatase methylesterase 1 (PPE1) (Candida glabrata (strain ATCC 2001 / BCRC 20586 / JCM 3761 / NBRC 0622 / NRRL Y-65 / CBS 138) (Yeast)).